The following is a 498-amino-acid chain: Protein flp (498 aa).

The next 4 helical transmembrane spans lie at 6 to 26, 389 to 409, 433 to 453, and 471 to 491; these read LYFL…IYIT, FNIV…FSAY, LTLC…YLIL, and LALI…LLFL.

It is found in the cell membrane. Its function is as follows. Its precise function is unknown. Has no penicillin-binding activity and is not involved in methicillin resistance. The chain is Protein flp (flp) from Staphylococcus aureus (strain Mu50 / ATCC 700699).